A 208-amino-acid chain; its full sequence is Large ribosomal subunit protein bL25 (208 aa).

Positions 185–195 (DLEEETGEAEG) are enriched in acidic residues. Positions 185–208 (DLEEETGEAEGETAAAPAEEGAES) are disordered. A compositionally biased stretch (low complexity) spans 196–208 (ETAAAPAEEGAES).

The protein belongs to the bacterial ribosomal protein bL25 family. CTC subfamily. As to quaternary structure, part of the 50S ribosomal subunit; part of the 5S rRNA/L5/L18/L25 subcomplex. Contacts the 5S rRNA. Binds to the 5S rRNA independently of L5 and L18.

Functionally, this is one of the proteins that binds to the 5S RNA in the ribosome where it forms part of the central protuberance. The polypeptide is Large ribosomal subunit protein bL25 (Rhodococcus opacus (strain B4)).